The chain runs to 145 residues: UPF0310 protein PH1033 (145 aa).

Belongs to the UPF0310 family.

The sequence is that of UPF0310 protein PH1033 from Pyrococcus horikoshii (strain ATCC 700860 / DSM 12428 / JCM 9974 / NBRC 100139 / OT-3).